Consider the following 1861-residue polypeptide: Amylopullulanase (1861 aa).

The first 35 residues, 1–35, serve as a signal peptide directing secretion; the sequence is MNKKLFTNRFISFNMSLLLVLTAVFSSIPLHSVHA. Residues Asp248, Asn250, Asp288, Asp343, Asn401, Asp403, Asn406, Asp407, and Asp453 each coordinate Ca(2+). Residues His526 and Arg626 each coordinate substrate. The active-site Nucleophile is Asp628. The active-site Proton donor is the Glu657. Residues 733–734, Asp793, and Arg797 each bind substrate; that span reads HD. Fibronectin type-III domains follow at residues 929-1021 and 1158-1252; these read APQA…AYPI and KPTA…VVPI. Residues 1246–1354 enclose the CBM20 domain; the sequence is KPDVVPIKVI…INDTVYRWRD (109 aa). The tract at residues 1448 to 1486 is disordered; the sequence is QENNSGSGTGNNNTSTSGSNSSSTGSGSTGSTSITSNIS. Residues 1450–1486 show a composition bias toward low complexity; it reads NNSGSGTGNNNTSTSGSNSSSTGSGSTGSTSITSNIS. SLH domains are found at residues 1677 to 1740, 1741 to 1799, and 1802 to 1861; these read EYDK…YSGE, FSDV…KEEN, and ATTF…SGNI.

The protein belongs to the glycosyl hydrolase 13 family. Requires Ca(2+) as cofactor. Post-translationally, glycosylated.

It localises to the secreted. The protein localises to the cell wall. It carries out the reaction Endohydrolysis of (1-&gt;4)-alpha-D-glucosidic linkages in polysaccharides containing three or more (1-&gt;4)-alpha-linked D-glucose units.. The enzyme catalyses Hydrolysis of (1-&gt;6)-alpha-D-glucosidic linkages in pullulan, amylopectin and glycogen, and in the alpha- and beta-limit dextrins of amylopectin and glycogen.. The polypeptide is Amylopullulanase (amyB) (Thermoanaerobacterium thermosulfurigenes (Clostridium thermosulfurogenes)).